The chain runs to 305 residues: MSADSAPQRILLVTGLLGAGKTTALRTLEDMGWEAIDNFPIRLLDRLLETEPGSARMEPGAPMAIGFDTRTRGFDPSRTIELVKKLSQRSDLQITTLFLDCAGTELERRYNETRRRHPMSEDKPAATGIAAERELLEPLRRWADVVITTTSFTTNDLQQAIRDQFGGEIATPTTITISSFGFSRGMPPLADLVFDMRFLANPHWVDDLRPQTGRDKAVGEYIRKDPAFDEAFERIRDLLLLLLPRYQEQGKAYVHIAFGCTGGRHRSVFMAEQIASALREAGFSPTLLHRNLSSRAADLLEGVKG.

ATP is bound at residue 15–22 (GLLGAGKT). 68-71 (DTRT) contributes to the GTP binding site.

Belongs to the RapZ-like family.

Its function is as follows. Displays ATPase and GTPase activities. The protein is Nucleotide-binding protein Saro_2904 of Novosphingobium aromaticivorans (strain ATCC 700278 / DSM 12444 / CCUG 56034 / CIP 105152 / NBRC 16084 / F199).